The sequence spans 79 residues: Morintide mO2 (79 aa).

Residues 1–20 (MAKLSFLSLFLLCLVATATA) form the signal peptide. The region spanning 21–63 (QNCGRQAGNRACANGLCCSQYGFCGSTSEYCSRANGCQSNCRG) is the Chitin-binding type-1 domain. 4 cysteine pairs are disulfide-bonded: Cys-23–Cys-38, Cys-32–Cys-44, Cys-37–Cys-51, and Cys-57–Cys-61. The propeptide occupies 64-79 (GGGAGGAGGGAGGGSP).

As to expression, leaves (at protein level).

In terms of biological role, chitin-binding protein which functions in defense against chitin-containing fungal pathogens. This chain is Morintide mO2, found in Moringa oleifera (Horseradish tree).